Consider the following 323-residue polypeptide: Phosphomevalonate kinase (323 aa).

The protein belongs to the GHMP kinase family. As to quaternary structure, homodimer. It depends on Mg(2+) as a cofactor.

The catalysed reaction is (R)-5-phosphomevalonate + ATP = (R)-5-diphosphomevalonate + ADP. The protein operates within isoprenoid biosynthesis; isopentenyl diphosphate biosynthesis via mevalonate pathway; isopentenyl diphosphate from (R)-mevalonate: step 2/3. Its function is as follows. Catalyzes the phosphorylation of (R)-mevalonate 5-phosphate (MVAP) to (R)-mevalonate 5-diphosphate (MVAPP). Functions in the mevalonate (MVA) pathway leading to isopentenyl diphosphate (IPP), a key precursor for the biosynthesis of isoprenoid compounds such as archaeal membrane lipids. The polypeptide is Phosphomevalonate kinase (Saccharolobus solfataricus (strain ATCC 35092 / DSM 1617 / JCM 11322 / P2) (Sulfolobus solfataricus)).